The following is a 147-amino-acid chain: Nucleoside diphosphate kinase (147 aa).

The ATP site is built by K11, F59, R87, T93, R104, and N114. H117 (pros-phosphohistidine intermediate) is an active-site residue.

Belongs to the NDK family. It depends on Mg(2+) as a cofactor.

It localises to the cytoplasm. It catalyses the reaction a 2'-deoxyribonucleoside 5'-diphosphate + ATP = a 2'-deoxyribonucleoside 5'-triphosphate + ADP. The enzyme catalyses a ribonucleoside 5'-diphosphate + ATP = a ribonucleoside 5'-triphosphate + ADP. Its function is as follows. Major role in the synthesis of nucleoside triphosphates other than ATP. The ATP gamma phosphate is transferred to the NDP beta phosphate via a ping-pong mechanism, using a phosphorylated active-site intermediate. This is Nucleoside diphosphate kinase from Sulfurisphaera tokodaii (strain DSM 16993 / JCM 10545 / NBRC 100140 / 7) (Sulfolobus tokodaii).